Here is a 233-residue protein sequence, read N- to C-terminus: Phosphatidylserine decarboxylase proenzyme (233 aa).

Ser190 acts as the Schiff-base intermediate with substrate; via pyruvic acid in catalysis. At Ser190 the chain carries Pyruvic acid (Ser); by autocatalysis.

It belongs to the phosphatidylserine decarboxylase family. PSD-A subfamily. In terms of assembly, heterodimer of a large membrane-associated beta subunit and a small pyruvoyl-containing alpha subunit. The cofactor is pyruvate. Post-translationally, is synthesized initially as an inactive proenzyme. Formation of the active enzyme involves a self-maturation process in which the active site pyruvoyl group is generated from an internal serine residue via an autocatalytic post-translational modification. Two non-identical subunits are generated from the proenzyme in this reaction, and the pyruvate is formed at the N-terminus of the alpha chain, which is derived from the carboxyl end of the proenzyme. The post-translation cleavage follows an unusual pathway, termed non-hydrolytic serinolysis, in which the side chain hydroxyl group of the serine supplies its oxygen atom to form the C-terminus of the beta chain, while the remainder of the serine residue undergoes an oxidative deamination to produce ammonia and the pyruvoyl prosthetic group on the alpha chain.

Its subcellular location is the cell membrane. It carries out the reaction a 1,2-diacyl-sn-glycero-3-phospho-L-serine + H(+) = a 1,2-diacyl-sn-glycero-3-phosphoethanolamine + CO2. The protein operates within phospholipid metabolism; phosphatidylethanolamine biosynthesis; phosphatidylethanolamine from CDP-diacylglycerol: step 2/2. Catalyzes the formation of phosphatidylethanolamine (PtdEtn) from phosphatidylserine (PtdSer). This chain is Phosphatidylserine decarboxylase proenzyme, found in Xanthobacter autotrophicus (strain ATCC BAA-1158 / Py2).